Consider the following 101-residue polypeptide: Apolipoprotein C-II (101 aa).

An N-terminal signal peptide occupies residues 1–22 (MGIRYLLVLVLVLLVLGCEVQG). The propeptide occupies 23 to 28 (AHMPQQ). A lipid binding region spans residues 66-74 (TMDEKIREI). The segment at 78 to 101 (STAAVSTYAGIFTDQLLSMLKGDQ) is lipoprotein lipase cofactor.

The protein belongs to the apolipoprotein C2 family. Post-translationally, proapolipoprotein C-II is synthesized as a sialic acid containing glycoprotein which is subsequently desialylated prior to its proteolytic processing. In terms of processing, proapolipoprotein C-II, the major form found in plasma undergoes proteolytic cleavage of its N-terminal hexapeptide to generate apolipoprotein C-II, which occurs as the minor form in plasma.

It localises to the secreted. Its function is as follows. Component of chylomicrons, very low-density lipoproteins (VLDL), low-density lipoproteins (LDL), and high-density lipoproteins (HDL) in plasma. Plays an important role in lipoprotein metabolism as an activator of lipoprotein lipase. Both proapolipoprotein C-II and apolipoprotein C-II can activate lipoprotein lipase. The protein is Apolipoprotein C-II (APOC2) of Neomonachus schauinslandi (Hawaiian monk seal).